Reading from the N-terminus, the 135-residue chain is uncharacterized protein (135 aa).

Residues 1-80 (MRSSSLPGAR…QRGSCASANA (80 aa)) form a disordered region. Residues 54-65 (GARGGGRRGWGG) are compositionally biased toward gly residues.

This is an uncharacterized protein from Homo sapiens (Human).